The following is a 1381-amino-acid chain: Major capsid protein (1381 aa).

The protein belongs to the herpesviridae major capsid protein family. As to quaternary structure, homomultimer. Makes the hexons and eleven out of twelve pentons. Interacts with triplex proteins 1/TRX1 and 2/TRX2; adjacent capsomers are linked together in groups of three by triplexes, heterotrimeric complexes composed of one molecule of TRX1 and two molecules of TRX2. Interacts with scaffold protein; this interaction allows efficient MCP transport to the host nucleus. Interacts with capsid vertex component 2/CVC2. Interacts with the small capsomere-interacting protein/SCP.

The protein localises to the virion. Its subcellular location is the host nucleus. Its function is as follows. Self-assembles to form an icosahedral capsid with a T=16 symmetry, about 200 nm in diameter, and consisting of 150 hexons and 12 pentons (total of 162 capsomers). Hexons form the edges and faces of the capsid and are each composed of six MCP molecules. In contrast, one penton is found at each of the 12 vertices. Eleven of the pentons are MCP pentamers, while the last vertex is occupied by the portal complex. The capsid is surrounded by a layer of proteinaceous material designated the tegument which, in turn, is enclosed in an envelope of host cell-derived lipids containing virus-encoded glycoproteins. This Epstein-Barr virus (strain AG876) (HHV-4) protein is Major capsid protein.